The sequence spans 184 residues: MARIGDNPIPFGDEVTVSVDDHNVVTIEGPKGTLTEQIDPEMTLDIADDHVVVRRPTNQKRHRSLHGLSRSLIVNMVEGVTEGYKKELKIIGVGYRAQMSDETLEIALGYSHPIYFLPPSDVAVSVDSDRGQDDIIIVEGIDKELVGQVAAKIRSLRPPEPYKGKGVRYVDEHVPLKAGKTAAR.

Belongs to the universal ribosomal protein uL6 family. In terms of assembly, part of the 50S ribosomal subunit.

Functionally, this protein binds to the 23S rRNA, and is important in its secondary structure. It is located near the subunit interface in the base of the L7/L12 stalk, and near the tRNA binding site of the peptidyltransferase center. This Salinibacter ruber (strain DSM 13855 / M31) protein is Large ribosomal subunit protein uL6.